A 368-amino-acid polypeptide reads, in one-letter code: 3-isopropylmalate dehydrogenase (368 aa).

79 to 91 (GPEWGTSSTVRPE) lines the NAD(+) pocket. Substrate is bound by residues Arg98, Arg108, Arg137, and Asp226. 3 residues coordinate Mg(2+): Asp226, Asp251, and Asp255. 291–303 (GSAPDISGKGIVN) is an NAD(+) binding site.

It belongs to the isocitrate and isopropylmalate dehydrogenases family. Homodimer. It depends on Mg(2+) as a cofactor. The cofactor is Mn(2+).

It localises to the cytoplasm. The enzyme catalyses (2R,3S)-3-isopropylmalate + NAD(+) = 4-methyl-2-oxopentanoate + CO2 + NADH. It participates in amino-acid biosynthesis; L-leucine biosynthesis; L-leucine from 3-methyl-2-oxobutanoate: step 3/4. Functionally, catalyzes the oxidation of 3-carboxy-2-hydroxy-4-methylpentanoate (3-isopropylmalate) to 3-carboxy-4-methyl-2-oxopentanoate. The product decarboxylates to 4-methyl-2 oxopentanoate. The protein is 3-isopropylmalate dehydrogenase (leu-1) of Neurospora crassa (strain ATCC 24698 / 74-OR23-1A / CBS 708.71 / DSM 1257 / FGSC 987).